A 159-amino-acid polypeptide reads, in one-letter code: MVSERSSKEKKRSRARSEDSSSSDYEEKVKRHRGTEKDDERRSRRSDKKDKKSHKHHKSSTSKKSKDDKPKKKHTESDHKLKEGIPELSMEDYFSKNNEFATWLKEEKRTYFNDLTTEAARGLFSRFVKRWNRGKLESRYYEGISTAPRTAHDWMIKRR.

The disordered stretch occupies residues 1 to 86 (MVSERSSKEK…SDHKLKEGIP (86 aa)). Residues 15–50 (ARSEDSSSSDYEEKVKRHRGTEKDDERRSRRSDKKD) show a composition bias toward basic and acidic residues. Residues 51–63 (KKSHKHHKSSTSK) show a composition bias toward basic residues. Residues 64-85 (KSKDDKPKKKHTESDHKLKEGI) are compositionally biased toward basic and acidic residues.

It is found in the nucleus. Its function is as follows. Component of the auxin signaling transduction pathway that regulates cell proliferation and differentiation during flowers stigmas and styles development. Involved in the regulation of auxin-related genes. This Arabidopsis thaliana (Mouse-ear cress) protein is Style cell-cycle inhibitor 1.